The primary structure comprises 146 residues: Hemoglobin subunit beta (146 aa).

V1 is modified (N-acetylvaline). The Globin domain occupies 2-146 (HLTADEKVSL…VANALAHKYH (145 aa)). S44 is subject to Phosphoserine. At K59 the chain carries N6-acetyllysine. H63 is a heme b binding site. Position 82 is an N6-acetyllysine (K82). H92 serves as a coordination point for heme b. An S-nitrosocysteine modification is found at C93. At K144 the chain carries N6-acetyllysine.

This sequence belongs to the globin family. In terms of assembly, heterotetramer of two alpha chains and two beta chains. In terms of tissue distribution, red blood cells.

Its function is as follows. Involved in oxygen transport from the lung to the various peripheral tissues. The sequence is that of Hemoglobin subunit beta from Tamias striatus (Eastern chipmunk).